Consider the following 359-residue polypeptide: Peroxisome assembly protein 12 (359 aa).

At 1–19 (MAEHGAHFTAASVADDQPS) the chain is on the peroxisomal matrix side. The chain crosses the membrane as a helical span at residues 20 to 47 (IFEVVAQDSLMTAVRPALQHVVKVLAES). The Cytoplasmic portion of the chain corresponds to 48–51 (NPTH). A helical transmembrane segment spans residues 52 to 76 (YGFLWRWFDEIFTLLDLLLQQHYLS). Residues 77–109 (RTSASFSENFYGLKRIVMGDTHKSQRLASAGLP) are Peroxisomal matrix-facing. The helical transmembrane segment at 110-139 (KQQLWKSIMFLVLLPYLKVKLEKLVSSLRE) threads the bilayer. Residues 140–144 (EDEYS) lie on the Cytoplasmic side of the membrane. The chain crosses the membrane as a helical span at residues 145 to 183 (IHPPSSRWKRFYRAFLAAYPFVNMAWEGWFLVQQLRYIL). Residues 184 to 249 (GKAQHHSPLL…VGGVALSLST (66 aa)) lie on the Peroxisomal matrix side of the membrane. A helical transmembrane segment spans residues 250 to 277 (GLSVGVFFLQFLDWWYSSENQETIKSLT). Residues 278 to 359 (ALPTPPPPVH…HLIKLYSPEN (82 aa)) are Cytoplasmic-facing. Zn(2+) contacts are provided by C304, C307, C325, and C328. An RING-type; degenerate zinc finger spans residues 304–343 (CPLCRKTRVNDTVLATSGYVFCYRCVFHYVRSHQACPITG).

Belongs to the pex2/pex10/pex12 family. Component of the PEX2-PEX10-PEX12 retrotranslocation channel, composed of PEX2, PEX10 and PEX12. Interacts with PEX19 via its cytoplasmic domain.

The protein resides in the peroxisome membrane. It participates in protein modification; protein ubiquitination. In terms of biological role, component of a retrotranslocation channel required for peroxisome organization by mediating export of the PEX5 receptor from peroxisomes to the cytosol, thereby promoting PEX5 recycling. The retrotranslocation channel is composed of PEX2, PEX10 and PEX12; each subunit contributing transmembrane segments that coassemble into an open channel that specifically allows the passage of PEX5 through the peroxisomal membrane. PEX12 also regulates PEX5 recycling by activating the E3 ubiquitin-protein ligase activity of PEX10. When PEX5 recycling is compromised, PEX12 stimulates PEX10-mediated polyubiquitination of PEX5, leading to its subsequent degradation. The polypeptide is Peroxisome assembly protein 12 (Homo sapiens (Human)).